Here is a 178-residue protein sequence, read N- to C-terminus: Large ribosomal subunit protein uL6 (178 aa).

It belongs to the universal ribosomal protein uL6 family. As to quaternary structure, part of the 50S ribosomal subunit.

Its function is as follows. This protein binds to the 23S rRNA, and is important in its secondary structure. It is located near the subunit interface in the base of the L7/L12 stalk, and near the tRNA binding site of the peptidyltransferase center. The protein is Large ribosomal subunit protein uL6 of Thermoplasma volcanium (strain ATCC 51530 / DSM 4299 / JCM 9571 / NBRC 15438 / GSS1).